The primary structure comprises 80 residues: MKKQWKPVDSRLNELMHEYSVSIEDLVECTGLSKQRINDYVGGFKSNMNIGTAMTFADAIGCSIEELYVWNFKERRQLTK.

An HTH cro/C1-type domain is found at 12–67 (LNELMHEYSVSIEDLVECTGLSKQRINDYVGGFKSNMNIGTAMTFADAIGCSIEEL). Positions 23–42 (IEDLVECTGLSKQRINDYVG) form a DNA-binding region, H-T-H motif.

This chain is SPbeta prophage-derived uncharacterized HTH-type transcriptional regulator YotL (yotL), found in Bacillus subtilis (strain 168).